The primary structure comprises 1079 residues: Error-prone DNA polymerase (1079 aa).

This sequence belongs to the DNA polymerase type-C family. DnaE2 subfamily.

The protein resides in the cytoplasm. It catalyses the reaction DNA(n) + a 2'-deoxyribonucleoside 5'-triphosphate = DNA(n+1) + diphosphate. In terms of biological role, DNA polymerase involved in damage-induced mutagenesis and translesion synthesis (TLS). It is not the major replicative DNA polymerase. This Ralstonia pickettii (strain 12J) protein is Error-prone DNA polymerase.